The following is a 105-amino-acid chain: uncharacterized protein (105 aa).

This is an uncharacterized protein from Mycobacterium bovis (strain ATCC BAA-935 / AF2122/97).